A 2197-amino-acid polypeptide reads, in one-letter code: uncharacterized protein (2197 aa).

An N-acetylserine modification is found at serine 2. Residues 2159 to 2195 (TIPFLAELLEDVELSVKSLAQDIIKQMEEMSGESLAE) form an HEAT repeat.

This sequence belongs to the HEATR1/UTP10 family.

It is found in the nucleus. It localises to the nucleolus. Functionally, involved in nucleolar processing of pre-18S ribosomal RNA. Involved in ribosome biosynthesis. This is an uncharacterized protein from Arabidopsis thaliana (Mouse-ear cress).